Consider the following 161-residue polypeptide: Urease accessory protein UreE (161 aa).

This sequence belongs to the UreE family. As to quaternary structure, homodimer.

The protein localises to the cytoplasm. Involved in urease metallocenter assembly. Binds nickel. Probably functions as a nickel donor during metallocenter assembly. It is not essential for urease activity. The sequence is that of Urease accessory protein UreE from Proteus mirabilis (strain HI4320).